Here is a 146-residue protein sequence, read N- to C-terminus: UPF0178 protein LMOf2365_1475 (146 aa).

It belongs to the UPF0178 family.

The sequence is that of UPF0178 protein LMOf2365_1475 from Listeria monocytogenes serotype 4b (strain F2365).